Reading from the N-terminus, the 526-residue chain is Light-independent protochlorophyllide reductase subunit B (526 aa).

Asp-36 lines the [4Fe-4S] cluster pocket. Asp-290 (proton donor) is an active-site residue. 425–426 (GL) contributes to the substrate binding site.

The protein belongs to the ChlB/BchB/BchZ family. In terms of assembly, protochlorophyllide reductase is composed of three subunits; ChlL, ChlN and ChlB. Forms a heterotetramer of two ChlB and two ChlN subunits. [4Fe-4S] cluster serves as cofactor.

It carries out the reaction chlorophyllide a + oxidized 2[4Fe-4S]-[ferredoxin] + 2 ADP + 2 phosphate = protochlorophyllide a + reduced 2[4Fe-4S]-[ferredoxin] + 2 ATP + 2 H2O. The protein operates within porphyrin-containing compound metabolism; chlorophyll biosynthesis (light-independent). Functionally, component of the dark-operative protochlorophyllide reductase (DPOR) that uses Mg-ATP and reduced ferredoxin to reduce ring D of protochlorophyllide (Pchlide) to form chlorophyllide a (Chlide). This reaction is light-independent. The NB-protein (ChlN-ChlB) is the catalytic component of the complex. The protein is Light-independent protochlorophyllide reductase subunit B of Prochlorococcus marinus subsp. pastoris (strain CCMP1986 / NIES-2087 / MED4).